Reading from the N-terminus, the 90-residue chain is Small ribosomal subunit protein uS15c (90 aa).

This sequence belongs to the universal ribosomal protein uS15 family. As to quaternary structure, part of the 30S ribosomal subunit.

It localises to the plastid. The protein localises to the chloroplast. The protein is Small ribosomal subunit protein uS15c (rps15) of Liriodendron tulipifera (Tuliptree).